Here is a 213-residue protein sequence, read N- to C-terminus: ATP phosphoribosyltransferase (213 aa).

This sequence belongs to the ATP phosphoribosyltransferase family. Short subfamily. Heteromultimer composed of HisG and HisZ subunits.

The protein resides in the cytoplasm. The catalysed reaction is 1-(5-phospho-beta-D-ribosyl)-ATP + diphosphate = 5-phospho-alpha-D-ribose 1-diphosphate + ATP. Its pathway is amino-acid biosynthesis; L-histidine biosynthesis; L-histidine from 5-phospho-alpha-D-ribose 1-diphosphate: step 1/9. Its function is as follows. Catalyzes the condensation of ATP and 5-phosphoribose 1-diphosphate to form N'-(5'-phosphoribosyl)-ATP (PR-ATP). Has a crucial role in the pathway because the rate of histidine biosynthesis seems to be controlled primarily by regulation of HisG enzymatic activity. This chain is ATP phosphoribosyltransferase (hisG), found in Bacillus subtilis (strain 168).